The following is a 340-amino-acid chain: Uroporphyrinogen decarboxylase (340 aa).

Substrate contacts are provided by residues 23 to 27, D72, Y147, T202, and H316; that span reads RQAGR.

Belongs to the uroporphyrinogen decarboxylase family. As to quaternary structure, homodimer.

Its subcellular location is the cytoplasm. The enzyme catalyses uroporphyrinogen III + 4 H(+) = coproporphyrinogen III + 4 CO2. The protein operates within porphyrin-containing compound metabolism; protoporphyrin-IX biosynthesis; coproporphyrinogen-III from 5-aminolevulinate: step 4/4. In terms of biological role, catalyzes the decarboxylation of four acetate groups of uroporphyrinogen-III to yield coproporphyrinogen-III. This is Uroporphyrinogen decarboxylase from Pelobacter propionicus (strain DSM 2379 / NBRC 103807 / OttBd1).